A 304-amino-acid chain; its full sequence is Tyrosine recombinase XerC (304 aa).

One can recognise a Core-binding (CB) domain in the interval N6–V92. Positions H113–D292 constitute a Tyr recombinase domain. Active-site residues include R152, K176, H244, R247, and H270. Residue Y279 is the O-(3'-phospho-DNA)-tyrosine intermediate of the active site.

It belongs to the 'phage' integrase family. XerC subfamily. As to quaternary structure, forms a cyclic heterotetrameric complex composed of two molecules of XerC and two molecules of XerD.

It localises to the cytoplasm. Functionally, site-specific tyrosine recombinase, which acts by catalyzing the cutting and rejoining of the recombining DNA molecules. The XerC-XerD complex is essential to convert dimers of the bacterial chromosome into monomers to permit their segregation at cell division. It also contributes to the segregational stability of plasmids. This chain is Tyrosine recombinase XerC, found in Haemophilus ducreyi (strain 35000HP / ATCC 700724).